The following is a 226-amino-acid chain: MKISEWPAEERPREKLMQRGVGSLSDAELLAVFLGSGVRGRNVVELARGLLVKFGGLRQLLEADRDAFVGELGLGPVRYGQLQALLEIGRRNLATSIERDCALESPSAVRRYLKAMLRHEPSEVFGCLFLDSKHRPLAFEILFRGTIDRASIYPREVVRRSLMHNAAALILCHNHPSGNSEPSQDDVHMTLALKRGLALIDVRVLDHIIVGDGEPLSMVEQGWIVA.

The region spanning 102 to 224 (ALESPSAVRR…PLSMVEQGWI (123 aa)) is the MPN domain. The Zn(2+) site is built by histidine 173, histidine 175, and aspartate 186. A JAMM motif motif is present at residues 173 to 186 (HNHPSGNSEPSQDD).

It belongs to the UPF0758 family.

In Pseudomonas putida (strain W619), this protein is UPF0758 protein PputW619_0186.